The chain runs to 203 residues: Octanoyltransferase (203 aa).

The BPL/LPL catalytic domain occupies 32-203 (ISTPDEIWLV…LMHKIREIFS (172 aa)). Substrate-binding positions include 71 to 78 (RGGKITYH), 138 to 140 (SLG), and 151 to 153 (GMA). The active-site Acyl-thioester intermediate is the C169.

The protein belongs to the LipB family.

It is found in the cytoplasm. It catalyses the reaction octanoyl-[ACP] + L-lysyl-[protein] = N(6)-octanoyl-L-lysyl-[protein] + holo-[ACP] + H(+). It functions in the pathway protein modification; protein lipoylation via endogenous pathway; protein N(6)-(lipoyl)lysine from octanoyl-[acyl-carrier-protein]: step 1/2. Its function is as follows. Catalyzes the transfer of endogenously produced octanoic acid from octanoyl-acyl-carrier-protein onto the lipoyl domains of lipoate-dependent enzymes. Lipoyl-ACP can also act as a substrate although octanoyl-ACP is likely to be the physiological substrate. The protein is Octanoyltransferase of Buchnera aphidicola subsp. Baizongia pistaciae (strain Bp).